The following is a 214-amino-acid chain: Small ribosomal subunit protein uS5 (214 aa).

The S5 DRBM domain occupies 54–117; that stretch reads LKYEVVDIKV…RDAKMNILPV (64 aa).

The protein belongs to the universal ribosomal protein uS5 family. In terms of assembly, part of the 30S ribosomal subunit. Contacts protein S4.

Functionally, with S4 and S12 plays an important role in translational accuracy. The chain is Small ribosomal subunit protein uS5 from Saccharolobus islandicus (strain Y.N.15.51 / Yellowstone #2) (Sulfolobus islandicus).